The primary structure comprises 492 residues: Cysteine--tRNA ligase (492 aa).

A Zn(2+)-binding site is contributed by cysteine 31. Positions 33–43 (PTVYGDPHLGH) match the 'HIGH' region motif. Positions 226, 251, and 255 each coordinate Zn(2+). Positions 283–287 (KMGKS) match the 'KMSKS' region motif. Lysine 286 contributes to the ATP binding site.

The protein belongs to the class-I aminoacyl-tRNA synthetase family. Monomer. The cofactor is Zn(2+).

Its subcellular location is the cytoplasm. It catalyses the reaction tRNA(Cys) + L-cysteine + ATP = L-cysteinyl-tRNA(Cys) + AMP + diphosphate. The protein is Cysteine--tRNA ligase of Azobacteroides pseudotrichonymphae genomovar. CFP2.